We begin with the raw amino-acid sequence, 536 residues long: Glucan 1,6-alpha-glucosidase (536 aa).

Asp-194 functions as the Nucleophile in the catalytic mechanism. Glu-236 serves as the catalytic Proton donor.

Belongs to the glycosyl hydrolase 13 family.

The protein resides in the cytoplasm. It carries out the reaction Hydrolysis of (1-&gt;6)-alpha-D-glucosidic linkages in (1-&gt;6)-alpha-D-glucans and derived oligosaccharides.. In terms of biological role, the physiological substrates may be short isomaltosaccharides. This is Glucan 1,6-alpha-glucosidase (dexB) from Streptococcus mutans serotype c (strain ATCC 700610 / UA159).